Consider the following 351-residue polypeptide: MNDSGNSSKVNVRPPSAGLGAPSPGKRKMLRLEVRNSQVPIERKPSWIRARATIGTEYRKVQERVKKQNLRTVCQEAGCPNIYECWEDREATFLIGGSQCTRRCDFCQIDTGKPAELDLDEPKRVGQSVAQMKLRYATVTGVARDDLPDGGVWLYAETIREIHKQCPGSGVEILIPDFNGKPELLQQIFEAQPEVYAHNIETVPRIFRRIRPAFRYDRSLDVISQGQKAGMITKSNLILGMGETGEEVTQALRDLKSAGCDIVTITQYLRPSPRHLPVARWVKPQEFIEYKEQAKEIGFSGVLAGPLVRSSYRAGKLWAQSVKAKMVEIPERVRKLINEIEMQETSFRQAV.

The span at 1–10 (MNDSGNSSKV) shows a compositional bias: polar residues. The segment at 1-27 (MNDSGNSSKVNVRPPSAGLGAPSPGKR) is disordered. The span at 14–24 (PPSAGLGAPSP) shows a compositional bias: low complexity. Cysteine 74, cysteine 79, cysteine 85, cysteine 100, cysteine 104, cysteine 107, and serine 311 together coordinate [4Fe-4S] cluster. The 215-residue stretch at 86–300 (WEDREATFLI…KEQAKEIGFS (215 aa)) folds into the Radical SAM core domain.

It belongs to the radical SAM superfamily. Lipoyl synthase family. It depends on [4Fe-4S] cluster as a cofactor.

It localises to the cytoplasm. The catalysed reaction is [[Fe-S] cluster scaffold protein carrying a second [4Fe-4S](2+) cluster] + N(6)-octanoyl-L-lysyl-[protein] + 2 oxidized [2Fe-2S]-[ferredoxin] + 2 S-adenosyl-L-methionine + 4 H(+) = [[Fe-S] cluster scaffold protein] + N(6)-[(R)-dihydrolipoyl]-L-lysyl-[protein] + 4 Fe(3+) + 2 hydrogen sulfide + 2 5'-deoxyadenosine + 2 L-methionine + 2 reduced [2Fe-2S]-[ferredoxin]. The protein operates within protein modification; protein lipoylation via endogenous pathway; protein N(6)-(lipoyl)lysine from octanoyl-[acyl-carrier-protein]: step 2/2. Catalyzes the radical-mediated insertion of two sulfur atoms into the C-6 and C-8 positions of the octanoyl moiety bound to the lipoyl domains of lipoate-dependent enzymes, thereby converting the octanoylated domains into lipoylated derivatives. The polypeptide is Lipoyl synthase (Tropheryma whipplei (strain TW08/27) (Whipple's bacillus)).